The following is a 608-amino-acid chain: Developmental regulatory protein wetA (608 aa).

7 disordered regions span residues 54 to 88 (ADHH…GVST), 102 to 125 (VDAT…VDPR), 146 to 186 (VSMS…MTRK), 202 to 226 (SKLR…NPPR), 309 to 352 (WPHQ…HAVP), 447 to 544 (AQTY…GDIG), and 556 to 576 (LMTG…EREA). Composition is skewed to low complexity over residues 77–88 (ESTASASSGVST), 107–119 (PSQP…PGAS), and 163–175 (SSPG…SQPS). The segment covering 313–338 (QHPHPHPHPHHPQAHTHPHPHPHPHP) has biased composition (basic residues). Composition is skewed to low complexity over residues 339-350 (HQQAVAGHPQHA) and 502-517 (SSNG…SGRG).

It belongs to the wetA family.

Functionally, abaA and wetA are pivotal regulators of conidiophore development and conidium maturation. They act individually and together to regulate their own expression and that of numerous other sporulation-specific genes. Functions to maintain conidial dormancy by suppressing microcycle conidiation. The protein is Developmental regulatory protein wetA of Gibberella zeae (strain ATCC MYA-4620 / CBS 123657 / FGSC 9075 / NRRL 31084 / PH-1) (Wheat head blight fungus).